We begin with the raw amino-acid sequence, 203 residues long: Urease accessory protein UreG (203 aa).

GTP is bound at residue 14 to 21 (GPVGAGKT).

It belongs to the SIMIBI class G3E GTPase family. UreG subfamily. In terms of assembly, homodimer. UreD, UreF and UreG form a complex that acts as a GTP-hydrolysis-dependent molecular chaperone, activating the urease apoprotein by helping to assemble the nickel containing metallocenter of UreC. The UreE protein probably delivers the nickel.

Its subcellular location is the cytoplasm. Functionally, facilitates the functional incorporation of the urease nickel metallocenter. This process requires GTP hydrolysis, probably effectuated by UreG. In Jannaschia sp. (strain CCS1), this protein is Urease accessory protein UreG.